Here is a 93-residue protein sequence, read N- to C-terminus: Pyrimidine/purine nucleoside phosphorylase (93 aa).

It belongs to the nucleoside phosphorylase PpnP family.

The enzyme catalyses a purine D-ribonucleoside + phosphate = a purine nucleobase + alpha-D-ribose 1-phosphate. The catalysed reaction is adenosine + phosphate = alpha-D-ribose 1-phosphate + adenine. It catalyses the reaction cytidine + phosphate = cytosine + alpha-D-ribose 1-phosphate. It carries out the reaction guanosine + phosphate = alpha-D-ribose 1-phosphate + guanine. The enzyme catalyses inosine + phosphate = alpha-D-ribose 1-phosphate + hypoxanthine. The catalysed reaction is thymidine + phosphate = 2-deoxy-alpha-D-ribose 1-phosphate + thymine. It catalyses the reaction uridine + phosphate = alpha-D-ribose 1-phosphate + uracil. It carries out the reaction xanthosine + phosphate = alpha-D-ribose 1-phosphate + xanthine. Catalyzes the phosphorolysis of diverse nucleosides, yielding D-ribose 1-phosphate and the respective free bases. Can use uridine, adenosine, guanosine, cytidine, thymidine, inosine and xanthosine as substrates. Also catalyzes the reverse reactions. This Pseudomonas aeruginosa (strain LESB58) protein is Pyrimidine/purine nucleoside phosphorylase.